A 197-amino-acid chain; its full sequence is MYB-like transcription factor EOBII (197 aa).

2 HTH myb-type domains span residues Asp-10–Leu-62 and Arg-63–Ile-117. 2 DNA-binding regions (H-T-H motif) span residues Trp-38–Leu-62 and Trp-90–Ile-113. The interval Gly-125 to Pro-158 is disordered. The segment covering Ala-138–Pro-158 has biased composition (polar residues).

As to expression, specifically expressed in flowers, mostly in stigmas, petal tubes and petal limbs, and, to a lower extent, in anthers and stamen. Also present at low levels in roots, stems, leaves and sepals.

The protein resides in the nucleus. Its function is as follows. MYB-type transcription factor controlling the production of volatile organic compounds (VOCs), including floral volatile benzenoids and phenylpropanoids (FVBP), in flowers of fragrant cultivars (e.g. cv. Mitchell and cv. V26) by regulating the expression of ODO1 and EOBI, key regulators of the shikimate pathway, and of several biosynthetic floral scent-related genes including IGS, PAL2 and CFAT. This scent, mostly produced in the evening and night by the petals, attracts the pollinators (e.g. the night-active hawkmoth pollinator Manduca sexta). Binds to and activates the ODO1 and EOBI promoters via MYB binding sites (MBS) 5'-AAACCTAAT-3' and 5'-CTAACT-3'. Regulates the promoters of IGS1, CFAT and PAL2. Controls flowers petal opening by modulating a global transcriptomic switch. The polypeptide is MYB-like transcription factor EOBII (Petunia hybrida (Petunia)).